A 248-amino-acid polypeptide reads, in one-letter code: Small ribosomal subunit protein uS2 (248 aa).

Belongs to the universal ribosomal protein uS2 family.

In Thiobacillus denitrificans (strain ATCC 25259 / T1), this protein is Small ribosomal subunit protein uS2.